The primary structure comprises 1331 residues: NPC1-like intracellular cholesterol transporter 1 (1331 aa).

The N-terminal stretch at 1–20 (MAAAWLGWLLWALLLSAAQG) is a signal peptide. At 21–282 (ELYTPKHEAG…RPSFYMGRMP (262 aa)) the chain is on the extracellular side. 9 cysteine pairs are disulfide-bonded: cysteine 32-cysteine 90, cysteine 38-cysteine 56, cysteine 77-cysteine 125, cysteine 91-cysteine 129, cysteine 113-cysteine 254, cysteine 116-cysteine 172, cysteine 189-cysteine 197, cysteine 243-cysteine 259, and cysteine 256-cysteine 263. Residues asparagine 53 and asparagine 85 are each glycosylated (N-linked (GlcNAc...) asparagine). A glycan (N-linked (GlcNAc...) asparagine) is linked at asparagine 138. An N-linked (GlcNAc...) asparagine glycan is attached at asparagine 244. A helical transmembrane segment spans residues 283–303 (GWLALIIIFTAVFVLLSAVLV). Residues 304–352 (RLRVVSNRNKNKAEGPQEAPKLPHKHKLSPHTILGRFFQNWGTRVASWP) lie on the Cytoplasmic side of the membrane. Residues 353 to 373 (LTVLALSFIVVIALAAGLTFI) form a helical membrane-spanning segment. Residues 374–632 (ELTTDPVELW…DEINRTTIQD (259 aa)) are Extracellular-facing. Residues asparagine 416, asparagine 431, asparagine 464, asparagine 479, asparagine 497, and asparagine 506 are each glycosylated (N-linked (GlcNAc...) asparagine). A disulfide bond links cysteine 471 and cysteine 485. A disulfide bridge connects residues cysteine 525 and cysteine 542. N-linked (GlcNAc...) asparagine glycans are attached at residues asparagine 606 and asparagine 626. In terms of domain architecture, SSD spans 632–797 (DLPVFAVSYI…MTAFVALLSL (166 aa)). The chain crosses the membrane as a helical span at residues 633–653 (LPVFAVSYIIVFLYISLALGS). At 654–665 (YSRCSRVAVESK) the chain is on the cytoplasmic side. The helical transmembrane segment at 666–686 (ATLGLGGVIVVLGAVLAAMGF) threads the bilayer. The Extracellular segment spans residues 687–696 (YSYLGVPSSL). The chain crosses the membrane as a helical span at residues 697 to 717 (VIIQVVPFLVLAVGADNIFIF). Residues 718–742 (VLEYQRLPRMPGEQREAHIGRTLGS) lie on the Cytoplasmic side of the membrane. The helical transmembrane segment at 743-763 (VAPSMLLCSLSEAICFFLGAL) threads the bilayer. The Extracellular portion of the chain corresponds to 764–776 (TPMPAVRTFALTS). The helical transmembrane segment at 777–797 (GLAIILDFLLQMTAFVALLSL) threads the bilayer. At 798 to 846 (DSKRQEASRPDVLCCFSTRKLPPPKEKEGLLLRFFRKIYAPFLLHRFIR) the chain is on the cytoplasmic side. The helical transmembrane segment at 847-867 (PVVMLLFLTLFGANLYLMCNI) threads the bilayer. The Extracellular portion of the chain corresponds to 868–1113 (NVGLDQELAL…QQYLTVLPEG (246 aa)). Asparagine 909 and asparagine 917 each carry an N-linked (GlcNAc...) asparagine glycan. Intrachain disulfides connect cysteine 920-cysteine 925, cysteine 967-cysteine 1025, and cysteine 981-cysteine 990. Residues asparagine 996, asparagine 1038, and asparagine 1076 are each glycosylated (N-linked (GlcNAc...) asparagine). A helical membrane pass occupies residues 1114–1134 (IFTLALCFVPTFVVCYLLLGL). The Cytoplasmic segment spans residues 1135–1142 (DMCSGILN). A helical transmembrane segment spans residues 1143 to 1163 (LLSIIMILVDTIGLMAVWGIS). The Extracellular segment spans residues 1164 to 1165 (YN). Residues 1166 to 1186 (AVSLINLVTAVGMSVEFVSHI) form a helical membrane-spanning segment. The Cytoplasmic portion of the chain corresponds to 1187–1206 (TRSFAVSTKPTRLERAKDAT). The helical transmembrane segment at 1207 to 1227 (VFMGSAVFAGVAMTNFPGILI) threads the bilayer. The Extracellular segment spans residues 1228-1242 (LGFAQAQLIQIFFFR). Residues 1243–1263 (LNLLITLLGLLHGLVFLPVVL) traverse the membrane as a helical segment. Residues 1264-1331 (SYLGPDVNQA…SSLPKSDQKF (68 aa)) are Cytoplasmic-facing.

This sequence belongs to the patched family. Interacts with RAB11A, MYO5B and RAB11FIP2. Interaction with RAB11A, MYO5B and RAB11FIP2 is required for proper transport to the plasma membrane upon cholesterol depletion. Interacts with NPC2. Interacts with LIMA1. Highly glycosylated. As to expression, small intestine showed the highest level of expression. Expression in other tissues including gall bladder, liver, testis and stomach is also observed. Along the duodenum-ileum axis, the levels vary in different segments of the intestine with peak expression in the proximal jejunum. Protein expression is confined to the enterocyte. Discrete localization to the epithelial layer bordering the luminal space along the crypt-villus axis. Protein expression in the enterocyte is observed closest to the luminal space. Expression in enterocytes from the proximal (jejunum) but not in the distal (ileum) region.

The protein localises to the apical cell membrane. The protein resides in the cell membrane. It carries out the reaction cholesterol(in) = cholesterol(out). The enzyme catalyses sitosterol(out) = sitosterol(in). Its function is as follows. Plays a major role in cholesterol homeostasis. Critical for the uptake of cholesterol across the plasma membrane of the intestinal enterocyte. Involved in plant sterol absorption, it transports sitosterol, although at lower rates than cholesterol. Is the direct molecular target of ezetimibe, a drug that inhibits cholesterol absorption and is approved for the treatment of hypercholesterolemia. May have a function in the transport of multiple lipids and their homeostasis, thereby influencing lipid metabolism regulation. May be involved in caveolin trafficking from the plasma membrane. Acts as a negative regulator of NPC2 and down-regulates its expression and secretion by inhibiting its maturation and accelerating its degradation. The chain is NPC1-like intracellular cholesterol transporter 1 from Rattus norvegicus (Rat).